The primary structure comprises 349 residues: Acyl-CoA Delta(11) desaturase (349 aa).

2 consecutive transmembrane segments (helical) span residues F41–S61 and T66–H86. Residues H86 to H91 carry the Histidine box-1 motif. The Histidine box-2 motif lies at H123–H127. The helical transmembrane segment at A184–W204 threads the bilayer. The Histidine box-3 signature appears at H263–H267. A helical membrane pass occupies residues F282–L302.

Belongs to the fatty acid desaturase type 1 family. The cofactor is Fe cation. Adult female pheromone gland. Increases by two or three orders of magnitude during the first 2 days after adult eclosion.

Its subcellular location is the endoplasmic reticulum membrane. It carries out the reaction an 11,12-saturated fatty acyl-CoA + 2 Fe(II)-[cytochrome b5] + O2 + 2 H(+) = an (11Z)-Delta(11)-fatty acyl-CoA + 2 Fe(III)-[cytochrome b5] + 2 H2O. In terms of biological role, catalyzes the formation of Delta(11) fatty acyl precursors in the pheromone gland. The polypeptide is Acyl-CoA Delta(11) desaturase (D11DS) (Trichoplusia ni (Cabbage looper)).